A 697-amino-acid chain; its full sequence is Transmembrane protein 168 (697 aa).

Transmembrane regions (helical) follow at residues 36–56, 63–83, and 89–109; these read LGYLARINLLVAICLGLYVRW, LILVIFILGLFVLGIASILYY, and AASLSLSNLWFGFLLGLLCFL. Residue asparagine 111 is glycosylated (N-linked (GlcNAc...) asparagine). 7 helical membrane-spanning segments follow: residues 172–192, 199–219, 223–243, 265–285, 293–313, 352–372, and 380–400; these read MLVEKSLSVILLVVALAMLII, FLAIPNLVIFAVLLFFSSLET, PIAFACFFICLITDPFLDIYF, LSVVFAGMIELTFFILSAFKL, FVIPGFSIFGIFWMICHIIFL, FCLISEQLVFFSLLATAILGA, and GIFLSMFLIVLPLESMAHGLF. Residues asparagine 533 and asparagine 598 are each glycosylated (N-linked (GlcNAc...) asparagine). Residues 646–666 form a helical membrane-spanning segment; sequence ITYPLVHLANWLCGLNLFWIC.

Belongs to the TMEM168 family.

It is found in the nucleus membrane. Its function is as follows. Plays a key role in maintaining the cardiac electrical stability by modulating cell surface expression of SCN5A. May play a role in the modulation of anxiety behavior by regulating GABAergic neuronal system in the nucleus accumbens. The sequence is that of Transmembrane protein 168 from Homo sapiens (Human).